Here is a 59-residue protein sequence, read N- to C-terminus: Large ribosomal subunit protein uL30 (59 aa).

Belongs to the universal ribosomal protein uL30 family. In terms of assembly, part of the 50S ribosomal subunit.

The polypeptide is Large ribosomal subunit protein uL30 (Haemophilus influenzae (strain 86-028NP)).